The primary structure comprises 475 residues: Ribulose bisphosphate carboxylase large chain (475 aa).

A propeptide spanning residues 1-2 is cleaved from the precursor; that stretch reads MS. Proline 3 carries the N-acetylproline modification. Lysine 14 bears the N6,N6,N6-trimethyllysine mark. Substrate is bound by residues asparagine 123 and threonine 173. Lysine 175 acts as the Proton acceptor in catalysis. Lysine 177 lines the substrate pocket. Positions 201, 203, and 204 each coordinate Mg(2+). Lysine 201 carries the post-translational modification N6-carboxylysine. Histidine 294 (proton acceptor) is an active-site residue. 3 residues coordinate substrate: arginine 295, histidine 327, and serine 379.

The protein belongs to the RuBisCO large chain family. Type I subfamily. As to quaternary structure, heterohexadecamer of 8 large chains and 8 small chains; disulfide-linked. The disulfide link is formed within the large subunit homodimers. Requires Mg(2+) as cofactor. In terms of processing, the disulfide bond which can form in the large chain dimeric partners within the hexadecamer appears to be associated with oxidative stress and protein turnover.

The protein resides in the plastid. The protein localises to the chloroplast. It catalyses the reaction 2 (2R)-3-phosphoglycerate + 2 H(+) = D-ribulose 1,5-bisphosphate + CO2 + H2O. It carries out the reaction D-ribulose 1,5-bisphosphate + O2 = 2-phosphoglycolate + (2R)-3-phosphoglycerate + 2 H(+). Functionally, ruBisCO catalyzes two reactions: the carboxylation of D-ribulose 1,5-bisphosphate, the primary event in carbon dioxide fixation, as well as the oxidative fragmentation of the pentose substrate in the photorespiration process. Both reactions occur simultaneously and in competition at the same active site. In Cycas taitungensis (Prince sago), this protein is Ribulose bisphosphate carboxylase large chain.